We begin with the raw amino-acid sequence, 286 residues long: 4-hydroxybenzoate octaprenyltransferase (286 aa).

A run of 8 helical transmembrane segments spans residues 20-40 (IGTL…AGGM), 43-63 (LKVL…GCII), 96-116 (LFVI…GLVV), 142-162 (FLGV…TGEV), 167-187 (WWLF…YAMV), 210-230 (QIIG…GWSA), 235-255 (VYGL…MLIF), and 266-286 (FLNN…DYLF).

The protein belongs to the UbiA prenyltransferase family. The cofactor is Mg(2+).

The protein resides in the cell inner membrane. It catalyses the reaction all-trans-octaprenyl diphosphate + 4-hydroxybenzoate = 4-hydroxy-3-(all-trans-octaprenyl)benzoate + diphosphate. The protein operates within cofactor biosynthesis; ubiquinone biosynthesis. In terms of biological role, catalyzes the prenylation of para-hydroxybenzoate (PHB) with an all-trans polyprenyl group. Mediates the second step in the final reaction sequence of ubiquinone-8 (UQ-8) biosynthesis, which is the condensation of the polyisoprenoid side chain with PHB, generating the first membrane-bound Q intermediate 3-octaprenyl-4-hydroxybenzoate. The protein is 4-hydroxybenzoate octaprenyltransferase of Shewanella oneidensis (strain ATCC 700550 / JCM 31522 / CIP 106686 / LMG 19005 / NCIMB 14063 / MR-1).